Reading from the N-terminus, the 105-residue chain is Large ribosomal subunit protein eL30 (105 aa).

Glycyl lysine isopeptide (Lys-Gly) (interchain with G-Cter in ubiquitin) cross-links involve residues K22, K53, and K83.

Belongs to the eukaryotic ribosomal protein eL30 family. As to quaternary structure, component of the large ribosomal subunit (LSU). Mature yeast ribosomes consist of a small (40S) and a large (60S) subunit. The 40S small subunit contains 1 molecule of ribosomal RNA (18S rRNA) and 33 different proteins (encoded by 57 genes). The large 60S subunit contains 3 rRNA molecules (25S, 5.8S and 5S rRNA) and 46 different proteins (encoded by 81 genes).

The protein localises to the cytoplasm. Its function is as follows. Component of the ribosome, a large ribonucleoprotein complex responsible for the synthesis of proteins in the cell. The small ribosomal subunit (SSU) binds messenger RNAs (mRNAs) and translates the encoded message by selecting cognate aminoacyl-transfer RNA (tRNA) molecules. The large subunit (LSU) contains the ribosomal catalytic site termed the peptidyl transferase center (PTC), which catalyzes the formation of peptide bonds, thereby polymerizing the amino acids delivered by tRNAs into a polypeptide chain. The nascent polypeptides leave the ribosome through a tunnel in the LSU and interact with protein factors that function in enzymatic processing, targeting, and the membrane insertion of nascent chains at the exit of the ribosomal tunnel. The polypeptide is Large ribosomal subunit protein eL30 (Saccharomyces cerevisiae (strain ATCC 204508 / S288c) (Baker's yeast)).